The sequence spans 90 residues: YcgL domain-containing protein Spro_2755 (90 aa).

Residues 1-85 (MLCVIYRSSK…PLENLLKQHL (85 aa)) enclose the YcgL domain.

The sequence is that of YcgL domain-containing protein Spro_2755 from Serratia proteamaculans (strain 568).